The sequence spans 91 residues: Probable Fe(2+)-trafficking protein (91 aa).

It belongs to the Fe(2+)-trafficking protein family.

Functionally, could be a mediator in iron transactions between iron acquisition and iron-requiring processes, such as synthesis and/or repair of Fe-S clusters in biosynthetic enzymes. In Burkholderia ambifaria (strain MC40-6), this protein is Probable Fe(2+)-trafficking protein.